Here is a 38-residue protein sequence, read N- to C-terminus: Photosystem I reaction center subunit IX (38 aa).

The helical transmembrane segment at 4–24 threads the bilayer; it reads FLTTAPVVAAIWFTLTAGILI.

This sequence belongs to the PsaJ family.

It is found in the cellular thylakoid membrane. Functionally, may help in the organization of the PsaE and PsaF subunits. The sequence is that of Photosystem I reaction center subunit IX from Parasynechococcus marenigrum (strain WH8102).